Consider the following 742-residue polypeptide: Phosphoribosylformylglycinamidine synthase subunit PurL (742 aa).

The active site involves His54. ATP is bound by residues Tyr57 and Lys96. Glu98 is a binding site for Mg(2+). Substrate is bound by residues 99–102 (SHNH) and Arg121. The active-site Proton acceptor is His100. Asp122 is a binding site for Mg(2+). Gln245 lines the substrate pocket. Position 273 (Asp273) interacts with Mg(2+). 317–319 (ESQ) serves as a coordination point for substrate. ATP is bound by residues Asp500 and Gly537. Residue Asn538 coordinates Mg(2+). Position 540 (Ser540) interacts with substrate.

It belongs to the FGAMS family. Monomer. Part of the FGAM synthase complex composed of 1 PurL, 1 PurQ and 2 PurS subunits.

It is found in the cytoplasm. The catalysed reaction is N(2)-formyl-N(1)-(5-phospho-beta-D-ribosyl)glycinamide + L-glutamine + ATP + H2O = 2-formamido-N(1)-(5-O-phospho-beta-D-ribosyl)acetamidine + L-glutamate + ADP + phosphate + H(+). It functions in the pathway purine metabolism; IMP biosynthesis via de novo pathway; 5-amino-1-(5-phospho-D-ribosyl)imidazole from N(2)-formyl-N(1)-(5-phospho-D-ribosyl)glycinamide: step 1/2. Part of the phosphoribosylformylglycinamidine synthase complex involved in the purines biosynthetic pathway. Catalyzes the ATP-dependent conversion of formylglycinamide ribonucleotide (FGAR) and glutamine to yield formylglycinamidine ribonucleotide (FGAM) and glutamate. The FGAM synthase complex is composed of three subunits. PurQ produces an ammonia molecule by converting glutamine to glutamate. PurL transfers the ammonia molecule to FGAR to form FGAM in an ATP-dependent manner. PurS interacts with PurQ and PurL and is thought to assist in the transfer of the ammonia molecule from PurQ to PurL. In Geobacillus kaustophilus (strain HTA426), this protein is Phosphoribosylformylglycinamidine synthase subunit PurL.